A 57-amino-acid polypeptide reads, in one-letter code: Large ribosomal subunit protein eL37 (57 aa).

Residues C20, C23, C35, and C38 each coordinate Zn(2+). The C4-type zinc-finger motif lies at 20–38 (CRRCGEKSYHKQKKVCASC).

The protein belongs to the eukaryotic ribosomal protein eL37 family. It depends on Zn(2+) as a cofactor.

Binds to the 23S rRNA. This is Large ribosomal subunit protein eL37 from Natronomonas pharaonis (strain ATCC 35678 / DSM 2160 / CIP 103997 / JCM 8858 / NBRC 14720 / NCIMB 2260 / Gabara) (Halobacterium pharaonis).